The following is a 206-amino-acid chain: Small ribosomal subunit protein uS4 (206 aa).

In terms of domain architecture, S4 RNA-binding spans 96–157 (SRLDNVVYRM…KAKNQARIQN (62 aa)).

Belongs to the universal ribosomal protein uS4 family. Part of the 30S ribosomal subunit. Contacts protein S5. The interaction surface between S4 and S5 is involved in control of translational fidelity.

Functionally, one of the primary rRNA binding proteins, it binds directly to 16S rRNA where it nucleates assembly of the body of the 30S subunit. In terms of biological role, with S5 and S12 plays an important role in translational accuracy. The sequence is that of Small ribosomal subunit protein uS4 from Chromohalobacter salexigens (strain ATCC BAA-138 / DSM 3043 / CIP 106854 / NCIMB 13768 / 1H11).